Here is a 162-residue protein sequence, read N- to C-terminus: Ribosome maturation factor RimP (162 aa).

Belongs to the RimP family.

It localises to the cytoplasm. Required for maturation of 30S ribosomal subunits. The protein is Ribosome maturation factor RimP of Cupriavidus taiwanensis (strain DSM 17343 / BCRC 17206 / CCUG 44338 / CIP 107171 / LMG 19424 / R1) (Ralstonia taiwanensis (strain LMG 19424)).